The sequence spans 56 residues: UPF0391 membrane protein Noc_0482 (56 aa).

2 helical membrane-spanning segments follow: residues M1–T21 and H29–G49.

Belongs to the UPF0391 family.

It localises to the cell membrane. In Nitrosococcus oceani (strain ATCC 19707 / BCRC 17464 / JCM 30415 / NCIMB 11848 / C-107), this protein is UPF0391 membrane protein Noc_0482.